Reading from the N-terminus, the 170-residue chain is UPF0201 protein MJ1564 (170 aa).

The span at 133–148 (NEDELEEEEEKEDSEE) shows a compositional bias: acidic residues. Positions 133–170 (NEDELEEEEEKEDSEEIKEGHKEENNLKIKVIDNSSGD) are disordered. Residues 149–163 (IKEGHKEENNLKIKV) show a composition bias toward basic and acidic residues.

It belongs to the UPF0201 family.

The protein is UPF0201 protein MJ1564 of Methanocaldococcus jannaschii (strain ATCC 43067 / DSM 2661 / JAL-1 / JCM 10045 / NBRC 100440) (Methanococcus jannaschii).